We begin with the raw amino-acid sequence, 223 residues long: Riboflavin kinase (223 aa).

A unknown region spans residues 1-89 (MHRINALKHL…KHIFCGDEDK (89 aa)). The tract at residues 90–223 (VELYGNVITG…IMIEDRSACE (134 aa)) is riboflavin kinase. 99–104 (GLGEGQ) lines the CDP pocket. Positions 128 and 130 each coordinate Mg(2+). Residues S185 and E193 each coordinate FMN. 198–201 (VHLR) contributes to the CDP binding site.

The protein belongs to the archaeal riboflavin kinase family. It depends on Mg(2+) as a cofactor.

The catalysed reaction is riboflavin + CTP = CDP + FMN + H(+). Its pathway is cofactor biosynthesis; FMN biosynthesis; FMN from riboflavin (CTP route): step 1/1. In terms of biological role, catalyzes the CTP-dependent phosphorylation of riboflavin (vitamin B2) to form flavin mononucleotide (FMN). This is Riboflavin kinase (ribK) from Methanococcoides burtonii (strain DSM 6242 / NBRC 107633 / OCM 468 / ACE-M).